We begin with the raw amino-acid sequence, 59 residues long: Ferredoxin-2 (59 aa).

2 consecutive 4Fe-4S ferredoxin-type domains span residues 3–32 and 33–59; these read YSVI…LQNG and KAVP…AIVE. The [4Fe-4S] cluster site is built by Cys12, Cys15, Cys18, Cys22, Cys42, Cys45, Cys48, and Cys52.

In terms of assembly, homodimer. [4Fe-4S] cluster is required as a cofactor.

Its subcellular location is the periplasm. Its function is as follows. Ferredoxins are iron-sulfur proteins that transfer electrons in a wide variety of metabolic reactions. This chain is Ferredoxin-2, found in Desulfomicrobium norvegicum (strain DSM 1741 / NCIMB 8310) (Desulfovibrio baculatus (strain Norway 4)).